A 430-amino-acid polypeptide reads, in one-letter code: Glutamate-1-semialdehyde 2,1-aminomutase (430 aa).

The residue at position 267 (Lys267) is an N6-(pyridoxal phosphate)lysine.

The protein belongs to the class-III pyridoxal-phosphate-dependent aminotransferase family. HemL subfamily. In terms of assembly, homodimer. Requires pyridoxal 5'-phosphate as cofactor.

The protein localises to the cytoplasm. It carries out the reaction (S)-4-amino-5-oxopentanoate = 5-aminolevulinate. The protein operates within porphyrin-containing compound metabolism; protoporphyrin-IX biosynthesis; 5-aminolevulinate from L-glutamyl-tRNA(Glu): step 2/2. This is Glutamate-1-semialdehyde 2,1-aminomutase from Sulfurovum sp. (strain NBC37-1).